The sequence spans 133 residues: Histone H2A.1 (133 aa).

The tract at residues 1–23 is disordered; it reads MSTTGKGGKAKGKTASSKQVSRS. Serine 2 is modified (N-acetylserine). Residues lysine 6, lysine 9, lysine 11, lysine 13, and lysine 18 each carry the N6-acetyllysine modification. Phosphoserine is present on serine 123. Lysine 124 participates in a covalent cross-link: Glycyl lysine isopeptide (Lys-Gly) (interchain with G-Cter in ubiquitin).

Belongs to the histone H2A family. As to quaternary structure, the nucleosome is a histone octamer containing two molecules each of H2A, H2B, H3 and H4 assembled in one H3-H4 heterotetramer and two H2A-H2B heterodimers. The octamer wraps approximately 147 bp of DNA. Monoubiquitination of Lys-124 gives a specific tag for epigenetic transcriptional repression. Post-translationally, acetylation occurs almost exclusively in the MAC.

It localises to the nucleus. It is found in the chromosome. Core component of nucleosome. Nucleosomes wrap and compact DNA into chromatin, limiting DNA accessibility to the cellular machineries which require DNA as a template. Histones thereby play a central role in transcription regulation, DNA repair, DNA replication and chromosomal stability. DNA accessibility is regulated via a complex set of post-translational modifications of histones, also called histone code, and nucleosome remodeling. This chain is Histone H2A.1 (HTA2), found in Tetrahymena thermophila (strain SB210).